We begin with the raw amino-acid sequence, 323 residues long: tRNA U34 carboxymethyltransferase (323 aa).

Carboxy-S-adenosyl-L-methionine-binding positions include Lys91, Trp105, Lys110, Gly130, 152-154 (DPT), 181-182 (IE), Met196, Tyr200, and Arg315.

The protein belongs to the class I-like SAM-binding methyltransferase superfamily. CmoB family. Homotetramer.

It carries out the reaction carboxy-S-adenosyl-L-methionine + 5-hydroxyuridine(34) in tRNA = 5-carboxymethoxyuridine(34) in tRNA + S-adenosyl-L-homocysteine + H(+). Catalyzes carboxymethyl transfer from carboxy-S-adenosyl-L-methionine (Cx-SAM) to 5-hydroxyuridine (ho5U) to form 5-carboxymethoxyuridine (cmo5U) at position 34 in tRNAs. The protein is tRNA U34 carboxymethyltransferase of Escherichia coli O157:H7.